The following is a 39-amino-acid chain: Photosystem I reaction center subunit IX (39 aa).

The helical transmembrane segment at 7–27 (FLTTAPVAFILFSSFVFALFI) threads the bilayer.

It belongs to the PsaJ family.

It is found in the cellular thylakoid membrane. Functionally, may help in the organization of the PsaE and PsaF subunits. In Synechococcus sp. (strain JA-3-3Ab) (Cyanobacteria bacterium Yellowstone A-Prime), this protein is Photosystem I reaction center subunit IX.